A 607-amino-acid chain; its full sequence is Aspartate--tRNA(Asp/Asn) ligase (607 aa).

Position 194 (glutamate 194) interacts with L-aspartate. The tract at residues 218–221 is aspartate; the sequence is QLFK. Arginine 240 is an L-aspartate binding site. Residues 240–242 and glutamine 249 each bind ATP; that span reads RDE. Residue histidine 468 coordinates L-aspartate. Glutamate 502 is a binding site for ATP. Arginine 509 contacts L-aspartate. Residue 554-557 coordinates ATP; that stretch reads GLDR.

The protein belongs to the class-II aminoacyl-tRNA synthetase family. Type 1 subfamily. In terms of assembly, homodimer.

Its subcellular location is the cytoplasm. The enzyme catalyses tRNA(Asx) + L-aspartate + ATP = L-aspartyl-tRNA(Asx) + AMP + diphosphate. Functionally, aspartyl-tRNA synthetase with relaxed tRNA specificity since it is able to aspartylate not only its cognate tRNA(Asp) but also tRNA(Asn). Reaction proceeds in two steps: L-aspartate is first activated by ATP to form Asp-AMP and then transferred to the acceptor end of tRNA(Asp/Asn). The polypeptide is Aspartate--tRNA(Asp/Asn) ligase (Desulfotalea psychrophila (strain LSv54 / DSM 12343)).